A 44-amino-acid chain; its full sequence is Small ribosomal subunit protein eS7 (44 aa).

A compositionally biased stretch (basic residues) spans 18-34 (KPTRKSRIKNKQKRPRS). The tract at residues 18 to 44 (KPTRKSRIKNKQKRPRSRTLTAVHDAI) is disordered.

The protein belongs to the eukaryotic ribosomal protein eS7 family. As to quaternary structure, component of the small ribosomal subunit.

The protein resides in the cytoplasm. The protein localises to the cytoskeleton. It is found in the microtubule organizing center. It localises to the centrosome. Its subcellular location is the nucleus. Functionally, component of the small ribosomal subunit. The ribosome is a large ribonucleoprotein complex responsible for the synthesis of proteins in the cell. Required for rRNA maturation. The chain is Small ribosomal subunit protein eS7 (rps7) from Salmo salar (Atlantic salmon).